Here is a 358-residue protein sequence, read N- to C-terminus: 3-dehydroquinate synthase (358 aa).

NAD(+)-binding positions include 105–109 (GVVGD), 129–130 (TT), K142, K151, and 169–172 (TLKT). Residues E184, H245, and H262 each contribute to the Zn(2+) site.

Belongs to the sugar phosphate cyclases superfamily. Dehydroquinate synthase family. NAD(+) serves as cofactor. Requires Co(2+) as cofactor. Zn(2+) is required as a cofactor.

Its subcellular location is the cytoplasm. The enzyme catalyses 7-phospho-2-dehydro-3-deoxy-D-arabino-heptonate = 3-dehydroquinate + phosphate. It participates in metabolic intermediate biosynthesis; chorismate biosynthesis; chorismate from D-erythrose 4-phosphate and phosphoenolpyruvate: step 2/7. In terms of biological role, catalyzes the conversion of 3-deoxy-D-arabino-heptulosonate 7-phosphate (DAHP) to dehydroquinate (DHQ). The protein is 3-dehydroquinate synthase of Enterococcus faecalis (strain ATCC 700802 / V583).